Consider the following 142-residue polypeptide: Large ribosomal subunit protein bL17 (142 aa).

The protein belongs to the bacterial ribosomal protein bL17 family. Part of the 50S ribosomal subunit. Contacts protein L32.

In Chlamydia abortus (strain DSM 27085 / S26/3) (Chlamydophila abortus), this protein is Large ribosomal subunit protein bL17.